The chain runs to 195 residues: MKIIGLTGSIAMGKSTAADFFKQAGISVFSADETVHQLYKSKPILSLIEHTFPGVVENGKVNRLKLSKILINDSEKLQTLEEIIHPLVQEKEKEFIDTARQQGKKIVVLDIPLLFEKKGEKRVDSIIVVSAPLAIQKERTMTRPDMNEKKFSFINAKQMPDEKKRERADFIINTGKDLENTHQQVFSIIENLLKN.

Positions 3–195 constitute a DPCK domain; sequence IIGLTGSIAM…FSIIENLLKN (193 aa). ATP is bound at residue 11–16; sequence AMGKST.

Belongs to the CoaE family.

It localises to the cytoplasm. It catalyses the reaction 3'-dephospho-CoA + ATP = ADP + CoA + H(+). The protein operates within cofactor biosynthesis; coenzyme A biosynthesis; CoA from (R)-pantothenate: step 5/5. Its function is as follows. Catalyzes the phosphorylation of the 3'-hydroxyl group of dephosphocoenzyme A to form coenzyme A. The protein is Dephospho-CoA kinase of Bartonella quintana (strain Toulouse) (Rochalimaea quintana).